A 263-amino-acid polypeptide reads, in one-letter code: TPR repeat-containing protein DDB_G0285095 (263 aa).

The span at 1–25 (MGCCGSKEKYNGEDVPKSQRLENRP) shows a compositional bias: basic and acidic residues. The interval 1–62 (MGCCGSKEKY…ASASQQNNPT (62 aa)) is disordered. TPR repeat units lie at residues 87-120 (SDLL…DTDN), 121-154 (SRAW…AAPK), and 162-195 (SSLL…GARS).

The sequence is that of TPR repeat-containing protein DDB_G0285095 from Dictyostelium discoideum (Social amoeba).